The chain runs to 387 residues: GTPase Obg (387 aa).

The region spanning 1–159 (MKFLDEAKIY…MWVRLEMKLL (159 aa)) is the Obg domain. One can recognise an OBG-type G domain in the interval 160–334 (ADVGLVGMPN…LVYHVGGMVK (175 aa)). GTP is bound by residues 166–173 (GMPNAGKS), 191–195 (FTTLQ), 213–216 (DIPG), 283–286 (SKAD), and 315–317 (SSA). Mg(2+)-binding residues include serine 173 and threonine 193. Residues 347 to 379 (LEDAPTRAGSKALRDEHAPSWQDDDDDDDDDDG) are disordered. The span at 368–379 (QDDDDDDDDDDG) shows a compositional bias: acidic residues.

The protein belongs to the TRAFAC class OBG-HflX-like GTPase superfamily. OBG GTPase family. In terms of assembly, monomer. Requires Mg(2+) as cofactor.

Its subcellular location is the cytoplasm. Its function is as follows. An essential GTPase which binds GTP, GDP and possibly (p)ppGpp with moderate affinity, with high nucleotide exchange rates and a fairly low GTP hydrolysis rate. Plays a role in control of the cell cycle, stress response, ribosome biogenesis and in those bacteria that undergo differentiation, in morphogenesis control. This Magnetococcus marinus (strain ATCC BAA-1437 / JCM 17883 / MC-1) protein is GTPase Obg.